The following is a 447-amino-acid chain: Serine/threonine-protein phosphatase 2A 55 kDa regulatory subunit B gamma isoform (447 aa).

7 WD repeats span residues 22-61 (TPAD…KNAP), 87-128 (EIEE…KRPE), 171-209 (GHTY…RSFN), 220-260 (DLTE…LCDK), 279-317 (EIIS…RPIE), 334-375 (ENDC…DVTL), and 410-446 (DFTK…NSDM).

Belongs to the phosphatase 2A regulatory subunit B family. PP2A consists of a common heterodimeric core enzyme, composed of a 36 kDa catalytic subunit (subunit C) and a 65 kDa constant regulatory subunit (PR65 or subunit A), that associates with a variety of regulatory subunits. Proteins that associate with the core dimer include three families of regulatory subunits B (the R2/B/PR55/B55, R3/B''/PR72/PR130/PR59 and R5/B'/B56 families), the 48 kDa variable regulatory subunit, viral proteins, and cell signaling molecules. Interacts with IER5.

The B regulatory subunit might modulate substrate selectivity and catalytic activity, and might also direct the localization of the catalytic enzyme to a particular subcellular compartment. This is Serine/threonine-protein phosphatase 2A 55 kDa regulatory subunit B gamma isoform (PPP2R2C) from Macaca fascicularis (Crab-eating macaque).